The primary structure comprises 448 residues: Trigger factor (448 aa).

In terms of domain architecture, PPIase FKBP-type spans 163–248; that stretch reads GDIVVIDFDG…VKDIRVPKAA (86 aa).

Belongs to the FKBP-type PPIase family. Tig subfamily.

The protein localises to the cytoplasm. It carries out the reaction [protein]-peptidylproline (omega=180) = [protein]-peptidylproline (omega=0). Functionally, involved in protein export. Acts as a chaperone by maintaining the newly synthesized protein in an open conformation. Functions as a peptidyl-prolyl cis-trans isomerase. This chain is Trigger factor, found in Rhodospirillum centenum (strain ATCC 51521 / SW).